A 615-amino-acid polypeptide reads, in one-letter code: Deoxyribodipyrimidine photo-lyase (615 aa).

The segment at 1 to 53 (MAPSKRKASAPPQTSHVNGNPSADKKRKTTTDAPPTNPNTSSDPLRAPHPFYK) is disordered. Positions 11–21 (PPQTSHVNGNP) are enriched in polar residues. Residues 31–40 (TDAPPTNPNT) show a composition bias toward low complexity. The Photolyase/cryptochrome alpha/beta domain occupies 108–249 (QAVVHWFKMD…AADVVHDTCV (142 aa)). Tyr-352 provides a ligand contact to FAD. Position 356 (Arg-356) interacts with DNA. An FAD-binding site is contributed by 364–368 (TSNLS). Interaction with DNA stretches follow at residues 407–414 (EVAWRDFY) and 474–475 (NR). Position 505 to 507 (505 to 507 (DGD)) interacts with FAD. Residue Gln-537 coordinates DNA.

It belongs to the DNA photolyase class-1 family. As to quaternary structure, monomer. FAD is required as a cofactor. Requires (6R)-5,10-methylene-5,6,7,8-tetrahydrofolate as cofactor.

The catalysed reaction is cyclobutadipyrimidine (in DNA) = 2 pyrimidine residues (in DNA).. Its function is as follows. Involved in repair of UV radiation-induced DNA damage. Catalyzes the light-dependent monomerization (300-600 nm) of cyclobutyl pyrimidine dimers (in cis-syn configuration), which are formed between adjacent bases on the same DNA strand upon exposure to ultraviolet radiation. The sequence is that of Deoxyribodipyrimidine photo-lyase (phr) from Neurospora crassa (strain ATCC 24698 / 74-OR23-1A / CBS 708.71 / DSM 1257 / FGSC 987).